The chain runs to 305 residues: MIKQRTLKRIVQATGVGLHTGKKVTLTLRPAPANTGVIYRRTDLNPPVDFPADAKSVRDTMLCTCLVNEHDVRISTVEHLNAALAGLGIDNIVIEVNAPEIPIMDGSAAPFVYLLLDAGIDELNCAKKFVRIKETVRVEDGDKWAEFRPYNGFTLDFTIDFNHPAIDSSSQRYAMNFSADAFMRQISRARTFGFMRDIEYLQSRGLCLGGSFDCAIVVDDYRVLNEDGLRFEDEFVRHKMLDAIGDLFMCGHNIIGAFTAYKSGHALNNKLLQAVLAKQEAWEFVTFQDDAELPLAFKAPSTVLA.

Residues histidine 79, histidine 238, and aspartate 242 each contribute to the Zn(2+) site. Histidine 265 serves as the catalytic Proton donor.

Belongs to the LpxC family. Requires Zn(2+) as cofactor.

It carries out the reaction a UDP-3-O-[(3R)-3-hydroxyacyl]-N-acetyl-alpha-D-glucosamine + H2O = a UDP-3-O-[(3R)-3-hydroxyacyl]-alpha-D-glucosamine + acetate. The protein operates within glycolipid biosynthesis; lipid IV(A) biosynthesis; lipid IV(A) from (3R)-3-hydroxytetradecanoyl-[acyl-carrier-protein] and UDP-N-acetyl-alpha-D-glucosamine: step 2/6. Functionally, catalyzes the hydrolysis of UDP-3-O-myristoyl-N-acetylglucosamine to form UDP-3-O-myristoylglucosamine and acetate, the committed step in lipid A biosynthesis. The protein is UDP-3-O-acyl-N-acetylglucosamine deacetylase of Salmonella agona (strain SL483).